The primary structure comprises 94 residues: Integration host factor subunit beta (94 aa).

It belongs to the bacterial histone-like protein family. Heterodimer of an alpha and a beta chain.

In terms of biological role, this protein is one of the two subunits of integration host factor, a specific DNA-binding protein that functions in genetic recombination as well as in transcriptional and translational control. This chain is Integration host factor subunit beta, found in Aeromonas hydrophila subsp. hydrophila (strain ATCC 7966 / DSM 30187 / BCRC 13018 / CCUG 14551 / JCM 1027 / KCTC 2358 / NCIMB 9240 / NCTC 8049).